Reading from the N-terminus, the 314-residue chain is Transcriptional activator RhrA (314 aa).

Residues alanine 210–leucine 310 enclose the HTH araC/xylS-type domain. DNA-binding regions (H-T-H motif) lie at residues threonine 228 to glycine 249 and isoleucine 277 to tyrosine 300.

Transcriptional activator of the rhizobactin regulon. In Rhizobium meliloti (strain 1021) (Ensifer meliloti), this protein is Transcriptional activator RhrA (rhrA).